The sequence spans 907 residues: DNA ligase 4 (907 aa).

Positions 273, 275, 280, 333, 378, 438, 443, 460, and 462 each coordinate ATP. Lys275 (N6-AMP-lysine intermediate) is an active-site residue. Glu333 provides a ligand contact to Mg(2+). Glu438 is a Mg(2+) binding site. BRCT domains are found at residues 655-754 and 800-906; these read PVSN…ESDI and VPLF…HYQC.

This sequence belongs to the ATP-dependent DNA ligase family. It depends on Mg(2+) as a cofactor.

It is found in the nucleus. It carries out the reaction ATP + (deoxyribonucleotide)n-3'-hydroxyl + 5'-phospho-(deoxyribonucleotide)m = (deoxyribonucleotide)n+m + AMP + diphosphate.. Its function is as follows. DNA ligase involved in DNA non-homologous end joining (NHEJ); required for double-strand break (DSB) repair. This is DNA ligase 4 (LIG4) from Kluyveromyces lactis (strain ATCC 8585 / CBS 2359 / DSM 70799 / NBRC 1267 / NRRL Y-1140 / WM37) (Yeast).